Reading from the N-terminus, the 141-residue chain is Nucleoside diphosphate kinase (141 aa).

ATP-binding residues include Lys-11, Phe-59, Arg-87, Thr-93, Arg-104, and Asn-114. His-117 (pros-phosphohistidine intermediate) is an active-site residue.

The protein belongs to the NDK family. In terms of assembly, homotetramer. The cofactor is Mg(2+).

The protein resides in the cytoplasm. It catalyses the reaction a 2'-deoxyribonucleoside 5'-diphosphate + ATP = a 2'-deoxyribonucleoside 5'-triphosphate + ADP. It carries out the reaction a ribonucleoside 5'-diphosphate + ATP = a ribonucleoside 5'-triphosphate + ADP. Functionally, major role in the synthesis of nucleoside triphosphates other than ATP. The ATP gamma phosphate is transferred to the NDP beta phosphate via a ping-pong mechanism, using a phosphorylated active-site intermediate. The polypeptide is Nucleoside diphosphate kinase (Bordetella avium (strain 197N)).